We begin with the raw amino-acid sequence, 489 residues long: Acetyl-coenzyme A carboxylase carboxyl transferase subunit beta, chloroplastic (489 aa).

The region spanning 225–489 is the CoA carboxyltransferase N-terminal domain; sequence LWIQCDNCYG…FFPLNKTEIK (265 aa). The Zn(2+) site is built by cysteine 229, cysteine 232, cysteine 245, and cysteine 248. The C4-type zinc finger occupies 229 to 248; that stretch reads CDNCYGLMYKKVEMNVCEEC.

Belongs to the AccD/PCCB family. As to quaternary structure, acetyl-CoA carboxylase is a heterohexamer composed of biotin carboxyl carrier protein, biotin carboxylase and 2 subunits each of ACCase subunit alpha and ACCase plastid-coded subunit beta (accD). Requires Zn(2+) as cofactor.

The protein localises to the plastid. It is found in the chloroplast stroma. It carries out the reaction N(6)-carboxybiotinyl-L-lysyl-[protein] + acetyl-CoA = N(6)-biotinyl-L-lysyl-[protein] + malonyl-CoA. The protein operates within lipid metabolism; malonyl-CoA biosynthesis; malonyl-CoA from acetyl-CoA: step 1/1. Component of the acetyl coenzyme A carboxylase (ACC) complex. Biotin carboxylase (BC) catalyzes the carboxylation of biotin on its carrier protein (BCCP) and then the CO(2) group is transferred by the transcarboxylase to acetyl-CoA to form malonyl-CoA. The chain is Acetyl-coenzyme A carboxylase carboxyl transferase subunit beta, chloroplastic from Draba nemorosa (Woodland whitlowgrass).